Here is a 712-residue protein sequence, read N- to C-terminus: NURS complex subunit red1 (712 aa).

The span at 1–22 shows a compositional bias: basic and acidic residues; the sequence is MSRSINLDELRKKALESKKKNE. Disordered regions lie at residues 1-71, 107-195, and 323-348; these read MSRS…DRFP, NKTF…TTNQ, and DDFS…GLTM. Residues 5-32 adopt a coiled-coil conformation; the sequence is INLDELRKKALESKKKNEEDESNDSDKE. A compositionally biased stretch (acidic residues) spans 23-42; that stretch reads EDESNDSDKEDGEISEDDPV. Positions 130-141 are enriched in low complexity; that stretch reads SETSDSSNTSQS. Composition is skewed to polar residues over residues 178-193 and 327-348; these read FLST…SKTT and NSKI…GLTM. The stretch at 351–379 forms a coiled coil; sequence SDYLALLRNKEEEIRRMTKLILRLESNKK. Positions 428-447 are disordered; that stretch reads PSISSSGASSSAATTNSDTT. Positions 471–501 form a coiled coil; the sequence is AQIKKSEIDILNNLIEKEEGELTKYQTLVKS. Over residues 545–567 the composition is skewed to polar residues; that stretch reads QADENSSQILSSKTSNAPNGTTE. Residues 545–568 form a disordered region; the sequence is QADENSSQILSSKTSNAPNGTTET. Residues 618–639 form a C3H1-type zinc finger; sequence FCKYETTGGVCNDDHCEASHFR.

In terms of assembly, interacts with mmi1, pla1 and rrp6.

It localises to the nucleus. Functionally, promotes the exosome-mediated degradation of mRNAs containing a DSR (determinant of selective removal) signal sequence from mitotic cells. The chain is NURS complex subunit red1 from Schizosaccharomyces pombe (strain 972 / ATCC 24843) (Fission yeast).